The following is a 305-amino-acid chain: Deoxyribonuclease gamma (305 aa).

An N-terminal signal peptide occupies residues 1-20; the sequence is MSRELAPLLLLLLSIHSALA. The Bipartite nuclear localization signal signature appears at 35-51; it reads KQEDKNAMDVIVKVIKR. Residues Glu100 and His155 contribute to the active site. The cysteines at positions 194 and 231 are disulfide-linked. The tract at residues 284–305 is not required for free DNA-nuclease activity but required for activity towards liposome-coated DNA; the sequence is SRAFTNSKKSVTLRKKTKSKRS. The Nuclear localization signal motif lies at 296–304; the sequence is LRKKTKSKR.

This sequence belongs to the DNase I family. Requires Ca(2+) as cofactor. Mg(2+) serves as cofactor. Post-translationally, poly-ADP-ribosylated by PARP1. ADP-ribosylation negatively regulates enzymatic activity during apoptosis. As to expression, liver and spleen.

The protein resides in the nucleus. It is found in the endoplasmic reticulum. It localises to the secreted. Inhibited by zinc. Functionally, has DNA hydrolytic activity. Is capable of both single- and double-stranded DNA cleavage, producing DNA fragments with 3'-OH ends. Can cleave chromatin to nucleosomal units and cleaves nucleosomal and liposome-coated DNA. Acts in internucleosomal DNA fragmentation (INDF) during apoptosis and necrosis. The role in apoptosis includes myogenic and neuronal differentiation, and BCR-mediated clonal deletion of self-reactive B cells. Is active on chromatin in apoptotic cell-derived membrane-coated microparticles and thus suppresses anti-DNA autoimmunity. Together with DNASE1, plays a key role in degrading neutrophil extracellular traps (NETs). NETs are mainly composed of DNA fibers and are released by neutrophils to bind pathogens during inflammation. Degradation of intravascular NETs by DNASE1 and DNASE1L3 is required to prevent formation of clots that obstruct blood vessels and cause organ damage following inflammation. In Homo sapiens (Human), this protein is Deoxyribonuclease gamma.